The primary structure comprises 315 residues: Methionyl-tRNA formyltransferase (315 aa).

113–116 serves as a coordination point for (6S)-5,6,7,8-tetrahydrofolate; the sequence is SLLP.

Belongs to the Fmt family.

It carries out the reaction L-methionyl-tRNA(fMet) + (6R)-10-formyltetrahydrofolate = N-formyl-L-methionyl-tRNA(fMet) + (6S)-5,6,7,8-tetrahydrofolate + H(+). In terms of biological role, attaches a formyl group to the free amino group of methionyl-tRNA(fMet). The formyl group appears to play a dual role in the initiator identity of N-formylmethionyl-tRNA by promoting its recognition by IF2 and preventing the misappropriation of this tRNA by the elongation apparatus. In Pectobacterium atrosepticum (strain SCRI 1043 / ATCC BAA-672) (Erwinia carotovora subsp. atroseptica), this protein is Methionyl-tRNA formyltransferase.